Reading from the N-terminus, the 398-residue chain is Cytochrome b (398 aa).

The helical transmembrane segment at 45 to 65 (LGSIAGIALVIQIITGVILAM) threads the bilayer. The heme b site is built by His-95 and His-109. Transmembrane regions (helical) follow at residues 96–116 (AVGASMFFAAIYLHIARGLYY), 129–149 (IGIIIFLIMMATAFMGYVLPW), 164–184 (FSAIPLVGEPIVIWLWGGFSV), 192–212 (FFALHYLFPFIIVVLVILHLV), 245–265 (FVGFGVYFIIFAYFIFYAPNY), 277–297 (PLVTPAHIVPEWYFLPFYAIL), 304–324 (LGGVFLMFGSIVVLFLLPWLD), 339–359 (IAFWIFMADCLFLGYLGSKPV), and 366–386 (ISRFAVCYYFCHFLLVLPLIG). Heme b contacts are provided by His-196 and His-210.

It belongs to the cytochrome b family. The main subunits of complex b-c1 are: cytochrome b, cytochrome c1 and the Rieske protein. It depends on heme b as a cofactor.

The protein localises to the cell membrane. Functionally, component of the ubiquinol-cytochrome c reductase complex (complex III or cytochrome b-c1 complex), which is a respiratory chain that generates an electrochemical potential coupled to ATP synthesis. In Rickettsia prowazekii (strain Madrid E), this protein is Cytochrome b (petB).